Reading from the N-terminus, the 141-residue chain is Hemoglobin subunit alpha (141 aa).

The Globin domain occupies 1-141 (VLSPADKTNV…VSTVLTSKYR (141 aa)). S3 is subject to Phosphoserine. K7 carries the post-translational modification N6-succinyllysine. The residue at position 8 (T8) is a Phosphothreonine. K11 bears the N6-succinyllysine mark. K16 carries the N6-acetyllysine; alternate modification. An N6-succinyllysine; alternate modification is found at K16. Y24 is modified (phosphotyrosine). The residue at position 35 (S35) is a Phosphoserine. K40 carries the post-translational modification N6-succinyllysine. A Phosphoserine modification is found at S49. H58 lines the O2 pocket. Residue H87 coordinates heme b. Phosphoserine is present on S102. T108 carries the phosphothreonine modification. A phosphoserine mark is found at S124 and S131. 2 positions are modified to phosphothreonine: T134 and T137. The residue at position 138 (S138) is a Phosphoserine.

The protein belongs to the globin family. As to quaternary structure, heterotetramer of two alpha chains and two beta chains. As to expression, red blood cells.

In terms of biological role, involved in oxygen transport from the lung to the various peripheral tissues. Functionally, hemopressin acts as an antagonist peptide of the cannabinoid receptor CNR1. Hemopressin-binding efficiently blocks cannabinoid receptor CNR1 and subsequent signaling. The chain is Hemoglobin subunit alpha (HBA) from Urocitellus parryii (Arctic ground squirrel).